Reading from the N-terminus, the 586-residue chain is Phosphomethylpyrimidine synthase (586 aa).

The disordered stretch occupies residues 1–59 (MKQSVSAEQIELKSSLPGSKKVYVDGPREGMKVPMREIEQSDTNGVPNPPIRVYDTSGP). A compositionally biased stretch (basic and acidic residues) spans 22 to 39 (VYVDGPREGMKVPMREIE). Substrate contacts are provided by residues asparagine 193, methionine 222, tyrosine 251, histidine 287, 307 to 309 (SRG), 348 to 351 (DGLR), and glutamate 387. Residue histidine 391 participates in Zn(2+) binding. Substrate is bound at residue tyrosine 414. Histidine 455 serves as a coordination point for Zn(2+). 3 residues coordinate [4Fe-4S] cluster: cysteine 535, cysteine 538, and cysteine 543.

Belongs to the ThiC family. [4Fe-4S] cluster is required as a cofactor.

It carries out the reaction 5-amino-1-(5-phospho-beta-D-ribosyl)imidazole + S-adenosyl-L-methionine = 4-amino-2-methyl-5-(phosphooxymethyl)pyrimidine + CO + 5'-deoxyadenosine + formate + L-methionine + 3 H(+). It participates in cofactor biosynthesis; thiamine diphosphate biosynthesis. Functionally, catalyzes the synthesis of the hydroxymethylpyrimidine phosphate (HMP-P) moiety of thiamine from aminoimidazole ribotide (AIR) in a radical S-adenosyl-L-methionine (SAM)-dependent reaction. This is Phosphomethylpyrimidine synthase from Bacillus cereus (strain ZK / E33L).